A 550-amino-acid chain; its full sequence is Dihydroxy-acid dehydratase (550 aa).

D78 serves as a coordination point for Mg(2+). C119 is a binding site for [2Fe-2S] cluster. The Mg(2+) site is built by D120 and K121. K121 carries the N6-carboxylysine modification. Position 191 (C191) interacts with [2Fe-2S] cluster. A Mg(2+)-binding site is contributed by E440. S466 serves as the catalytic Proton acceptor.

Belongs to the IlvD/Edd family. As to quaternary structure, homodimer. [2Fe-2S] cluster serves as cofactor. Mg(2+) is required as a cofactor.

The enzyme catalyses (2R)-2,3-dihydroxy-3-methylbutanoate = 3-methyl-2-oxobutanoate + H2O. It catalyses the reaction (2R,3R)-2,3-dihydroxy-3-methylpentanoate = (S)-3-methyl-2-oxopentanoate + H2O. It participates in amino-acid biosynthesis; L-isoleucine biosynthesis; L-isoleucine from 2-oxobutanoate: step 3/4. Its pathway is amino-acid biosynthesis; L-valine biosynthesis; L-valine from pyruvate: step 3/4. In terms of biological role, functions in the biosynthesis of branched-chain amino acids. Catalyzes the dehydration of (2R,3R)-2,3-dihydroxy-3-methylpentanoate (2,3-dihydroxy-3-methylvalerate) into 2-oxo-3-methylpentanoate (2-oxo-3-methylvalerate) and of (2R)-2,3-dihydroxy-3-methylbutanoate (2,3-dihydroxyisovalerate) into 2-oxo-3-methylbutanoate (2-oxoisovalerate), the penultimate precursor to L-isoleucine and L-valine, respectively. This is Dihydroxy-acid dehydratase from Methanococcus vannielii (strain ATCC 35089 / DSM 1224 / JCM 13029 / OCM 148 / SB).